A 535-amino-acid chain; its full sequence is Glucose-6-phosphate isomerase (535 aa).

Glutamate 347 (proton donor) is an active-site residue. Catalysis depends on residues histidine 378 and lysine 493.

It belongs to the GPI family.

The protein localises to the cytoplasm. It carries out the reaction alpha-D-glucose 6-phosphate = beta-D-fructose 6-phosphate. Its pathway is carbohydrate biosynthesis; gluconeogenesis. It participates in carbohydrate degradation; glycolysis; D-glyceraldehyde 3-phosphate and glycerone phosphate from D-glucose: step 2/4. Functionally, catalyzes the reversible isomerization of glucose-6-phosphate to fructose-6-phosphate. The protein is Glucose-6-phosphate isomerase of Chlamydia felis (strain Fe/C-56) (Chlamydophila felis).